Consider the following 250-residue polypeptide: Cytochrome c oxidase subunit 2 (250 aa).

The Mitochondrial intermembrane segment spans residues Met-1–Asn-39. Residues Ile-40–Ile-60 traverse the membrane as a helical segment. Residues Asn-61–Glu-81 are Mitochondrial matrix-facing. A helical transmembrane segment spans residues Leu-82 to Tyr-104. The Mitochondrial intermembrane segment spans residues Leu-105 to Gln-250. Residues His-185, Cys-220, Glu-222, Cys-224, His-228, and Met-231 each contribute to the Cu cation site. Mg(2+) is bound at residue Glu-222.

This sequence belongs to the cytochrome c oxidase subunit 2 family. In terms of assembly, component of the cytochrome c oxidase (complex IV, CIV), a multisubunit enzyme composed of a catalytic core of 3 subunits and several supernumerary subunits. The complex exists as a monomer or a dimer and forms supercomplexes (SCs) in the inner mitochondrial membrane with ubiquinol-cytochrome c oxidoreductase (cytochrome b-c1 complex, complex III, CIII). The cofactor is Cu cation.

It localises to the mitochondrion inner membrane. It catalyses the reaction 4 Fe(II)-[cytochrome c] + O2 + 8 H(+)(in) = 4 Fe(III)-[cytochrome c] + 2 H2O + 4 H(+)(out). Its function is as follows. Component of the cytochrome c oxidase, the last enzyme in the mitochondrial electron transport chain which drives oxidative phosphorylation. The respiratory chain contains 3 multisubunit complexes succinate dehydrogenase (complex II, CII), ubiquinol-cytochrome c oxidoreductase (cytochrome b-c1 complex, complex III, CIII) and cytochrome c oxidase (complex IV, CIV), that cooperate to transfer electrons derived from NADH and succinate to molecular oxygen, creating an electrochemical gradient over the inner membrane that drives transmembrane transport and the ATP synthase. Cytochrome c oxidase is the component of the respiratory chain that catalyzes the reduction of oxygen to water. Electrons originating from reduced cytochrome c in the intermembrane space (IMS) are transferred via the dinuclear copper A center (CU(A)) of subunit 2 and heme A of subunit 1 to the active site in subunit 1, a binuclear center (BNC) formed by heme A3 and copper B (CU(B)). The BNC reduces molecular oxygen to 2 water molecules using 4 electrons from cytochrome c in the IMS and 4 protons from the mitochondrial matrix. This chain is Cytochrome c oxidase subunit 2 (COII), found in Podospora anserina (strain S / ATCC MYA-4624 / DSM 980 / FGSC 10383) (Pleurage anserina).